Here is a 503-residue protein sequence, read N- to C-terminus: Na(+)-translocating NADH-quinone reductase subunit B (503 aa).

Transmembrane regions (helical) follow at residues 55 to 75, 85 to 105, 120 to 142, 161 to 181, and 186 to 206; these read MMLV…NSGL, PQIM…SFVS, IFLP…FAII, ILPP…GVVI, and FGGT…FLFF. T248 is modified (FMN phosphoryl threonine). The next 5 membrane-spanning stretches (helical) occupy residues 361-381, 387-407, 417-437, 452-472, and 475-495; these read TSTV…IASW, FGLS…LAAG, FFIP…LVFM, WFYG…NPAY, and GVML…RIAL.

It belongs to the NqrB/RnfD family. In terms of assembly, composed of six subunits; NqrA, NqrB, NqrC, NqrD, NqrE and NqrF. Requires FMN as cofactor.

It is found in the cell inner membrane. It carries out the reaction a ubiquinone + n Na(+)(in) + NADH + H(+) = a ubiquinol + n Na(+)(out) + NAD(+). NQR complex catalyzes the reduction of ubiquinone-1 to ubiquinol by two successive reactions, coupled with the transport of Na(+) ions from the cytoplasm to the periplasm. NqrA to NqrE are probably involved in the second step, the conversion of ubisemiquinone to ubiquinol. The polypeptide is Na(+)-translocating NADH-quinone reductase subunit B (Chlamydia muridarum (strain MoPn / Nigg)).